Reading from the N-terminus, the 587-residue chain is 5-aminolevulinate synthase, erythroid-specific, mitochondrial (587 aa).

The transit peptide at 1-49 (MVAAAMLLRSCPVLSKGPTGLLGKVAKTYQFLFGIGRCPILATQGPTCS) directs the protein to the mitochondrion. Residue R163 coordinates succinyl-CoA. The pyridoxal 5'-phosphate site is built by C258 and F259. 2 residues coordinate succinyl-CoA: S280 and K299. Positions 332, 360, and 388 each coordinate pyridoxal 5'-phosphate. The active site involves K391. K391 is modified (N6-(pyridoxal phosphate)lysine). Positions 420 and 421 each coordinate pyridoxal 5'-phosphate. T508 contributes to the succinyl-CoA binding site.

It belongs to the class-II pyridoxal-phosphate-dependent aminotransferase family. As to quaternary structure, homodimer. Interacts with SUCLA2. The cofactor is pyridoxal 5'-phosphate. Erythroid-specific.

The protein localises to the mitochondrion inner membrane. The enzyme catalyses succinyl-CoA + glycine + H(+) = 5-aminolevulinate + CO2 + CoA. The protein operates within porphyrin-containing compound metabolism; protoporphyrin-IX biosynthesis; 5-aminolevulinate from glycine: step 1/1. Functionally, catalyzes the pyridoxal 5'-phosphate (PLP)-dependent condensation of succinyl-CoA and glycine to form aminolevulinic acid (ALA), with CoA and CO2 as by-products. Contributes significantly to heme formation during erythropoiesis. The protein is 5-aminolevulinate synthase, erythroid-specific, mitochondrial (Alas2) of Rattus norvegicus (Rat).